A 539-amino-acid chain; its full sequence is Acid-sensing ion channel 4-A (539 aa).

The Cytoplasmic segment spans residues 1–68 (MPIEFVCKIK…SGRLGVRQTL (68 aa)). The helical transmembrane segment at 69–89 (WALAFLVSLALFLYQAAKCAI) threads the bilayer. Residues 90–432 (SYLEHPHVTA…EQKKAYDVAG (343 aa)) lie on the Extracellular side of the membrane. 2 cysteine pairs are disulfide-bonded: cysteine 116–cysteine 200 and cysteine 178–cysteine 185. N-linked (GlcNAc...) asparagine glycosylation is found at asparagine 136, asparagine 165, asparagine 179, asparagine 184, asparagine 206, and asparagine 241. Intrachain disulfides connect cysteine 294-cysteine 369, cysteine 313-cysteine 365, cysteine 317-cysteine 363, cysteine 326-cysteine 347, and cysteine 328-cysteine 340. A glycan (N-linked (GlcNAc...) asparagine) is linked at asparagine 370. A helical transmembrane segment spans residues 433 to 453 (LLGDIGGQMGLFIGASVLTIL). The GAS motif; ion selectivity filter motif lies at 446-448 (GAS). Over 454 to 539 (EILDYVYEVI…HHRVSEDFAC (86 aa)) the chain is Cytoplasmic. The interval 474–494 (QRDDKKQTQQQQQASTVATVN) is disordered.

This sequence belongs to the amiloride-sensitive sodium channel (TC 1.A.6) family. ASIC4 subfamily. Homotrimer. Heterotrimer; with other ASIC proteins producing functional channels. As to expression, expressed in central nervous system.

It localises to the cell membrane. It carries out the reaction Na(+)(in) = Na(+)(out). Inhibited by the diuretic drug amiloride. In terms of biological role, could form pH-gated trimeric sodium channels and function as a postsynaptic excitatory receptors in the nervous system. This is Acid-sensing ion channel 4-A from Danio rerio (Zebrafish).